Reading from the N-terminus, the 390-residue chain is ATP-sensitive inward rectifier potassium channel 11 (390 aa).

At Met-1–Asp-65 the chain is on the cytoplasmic side. 2 residues coordinate ATP: Asn-48 and Arg-50. The helical transmembrane segment at Leu-66–Leu-92 threads the bilayer. The Extracellular portion of the chain corresponds to Ile-93 to Ser-116. Cys-110 and Cys-142 are disulfide-bonded. Positions Phe-117–Phe-133 form an intramembrane region, discontinuously helical; Pore-forming. K(+) contacts are provided by Thr-130 and Phe-133. Residues Thr-130–Gly-135 carry the Selectivity filter motif. Residues Gly-134 to Cys-142 lie on the Extracellular side of the membrane. The helical transmembrane segment at Pro-143–Thr-171 threads the bilayer. At Ser-172–Ser-390 the chain is on the cytoplasmic side. A 1,2-diacyl-sn-glycero-3-phospho-(1D-myo-inositol-4,5-bisphosphate) is bound at residue Arg-176. ATP is bound at residue Tyr-330. The residue at position 341 (Thr-341) is a Phosphothreonine; by MAPK1. Position 385 is a phosphoserine; by MAPK1 (Ser-385).

Belongs to the inward rectifier-type potassium channel (TC 1.A.2.1) family. KCNJ11 subfamily. In terms of assembly, homotetramer; the homotetramer binds four ATP molecules (one ATP per subunit). Forms an heterooctamer with ABCC8/SUR1; one KCNJ11 homotetramer interacts with four ABCC8/SUR1 molecules. Interacts with ABCC9/SUR2. Phosphorylation by MAPK1 results in changes in channel gating that destabilize the closed states and reduce the ATP sensitivity.

The protein localises to the membrane. The enzyme catalyses K(+)(in) = K(+)(out). Its activity is regulated as follows. KATP channels are regulated by cytoplasmic ATP/ADP ratios; ATP inhibits the channel by closing the pore, while ADP activates the channel. Activated by phosphatidylinositol 4,5-biphosphate (PtdIns(4,5)P2). Its function is as follows. Inward rectifier potassium channel that forms the pore of ATP-sensitive potassium channels (KATP), regulating potassium permeability as a function of cytoplasmic ATP and ADP concentrations in many different cells. Inward rectifier potassium channels are characterized by a greater tendency to allow potassium to flow into the cell rather than out of it. Their voltage dependence is regulated by the concentration of extracellular potassium; as external potassium is raised, the voltage range of the channel opening shifts to more positive voltages. The inward rectification is mainly due to the blockage of outward current by internal magnesium. Can be blocked by extracellular barium. In pancreatic cells, it forms KATP channels with ABCC8/SUR1. Can form cardiac and smooth muscle-type KATP channels with ABCC9. In Cavia porcellus (Guinea pig), this protein is ATP-sensitive inward rectifier potassium channel 11 (KCNJ11).